A 297-amino-acid polypeptide reads, in one-letter code: Giardin subunit alpha-6 (297 aa).

Annexin repeat units follow at residues 3–72, 74–146, 153–222, and 226–295; these read TTVQ…AYLW, KPGD…HWIL, FDID…AAHY, and HPAR…ILWR.

This sequence belongs to the annexin family. Giardin subunit alpha subfamily.

The protein localises to the cytoplasm. Its subcellular location is the cytoskeleton. Functionally, giardins are involved in parasite attachment to the intestinal mucosa and in the cytoskeletal disassembly and reassembly that marks the transition from infectious trophozoite to transmissible cyst. They may interact with other cytoskeletal proteins such as microtubules in the microribbons or crossbridges, to maintain the integrity of the ventral disk. This Giardia intestinalis (Giardia lamblia) protein is Giardin subunit alpha-6.